Consider the following 444-residue polypeptide: Methylenetetrahydrofolate--tRNA-(uracil-5-)-methyltransferase TrmFO (444 aa).

9–14 (GAGMAG) provides a ligand contact to FAD.

This sequence belongs to the MnmG family. TrmFO subfamily. FAD is required as a cofactor.

Its subcellular location is the cytoplasm. The catalysed reaction is uridine(54) in tRNA + (6R)-5,10-methylene-5,6,7,8-tetrahydrofolate + NADH + H(+) = 5-methyluridine(54) in tRNA + (6S)-5,6,7,8-tetrahydrofolate + NAD(+). The enzyme catalyses uridine(54) in tRNA + (6R)-5,10-methylene-5,6,7,8-tetrahydrofolate + NADPH + H(+) = 5-methyluridine(54) in tRNA + (6S)-5,6,7,8-tetrahydrofolate + NADP(+). Its function is as follows. Catalyzes the folate-dependent formation of 5-methyl-uridine at position 54 (M-5-U54) in all tRNAs. This chain is Methylenetetrahydrofolate--tRNA-(uracil-5-)-methyltransferase TrmFO, found in Cereibacter sphaeroides (strain ATCC 17023 / DSM 158 / JCM 6121 / CCUG 31486 / LMG 2827 / NBRC 12203 / NCIMB 8253 / ATH 2.4.1.) (Rhodobacter sphaeroides).